Consider the following 127-residue polypeptide: Fluoride-specific ion channel FluC (127 aa).

4 helical membrane passes run leucine 8–phenylalanine 28, proline 37–isoleucine 57, tryptophan 68–tyrosine 88, and isoleucine 100–glycine 120. Na(+) contacts are provided by glycine 78 and threonine 81.

Belongs to the fluoride channel Fluc/FEX (TC 1.A.43) family.

The protein localises to the cell inner membrane. It carries out the reaction fluoride(in) = fluoride(out). Its activity is regulated as follows. Na(+) is not transported, but it plays an essential structural role and its presence is essential for fluoride channel function. Its function is as follows. Fluoride-specific ion channel. Important for reducing fluoride concentration in the cell, thus reducing its toxicity. This Leptospira interrogans serogroup Icterohaemorrhagiae serovar copenhageni (strain Fiocruz L1-130) protein is Fluoride-specific ion channel FluC.